The following is a 72-amino-acid chain: Translation initiation factor IF-1 (72 aa).

The S1-like domain maps to 1–72; the sequence is MAKEDNIEMQ…SKGRIVFRSR (72 aa).

The protein belongs to the IF-1 family. As to quaternary structure, component of the 30S ribosomal translation pre-initiation complex which assembles on the 30S ribosome in the order IF-2 and IF-3, IF-1 and N-formylmethionyl-tRNA(fMet); mRNA recruitment can occur at any time during PIC assembly.

The protein resides in the cytoplasm. In terms of biological role, one of the essential components for the initiation of protein synthesis. Stabilizes the binding of IF-2 and IF-3 on the 30S subunit to which N-formylmethionyl-tRNA(fMet) subsequently binds. Helps modulate mRNA selection, yielding the 30S pre-initiation complex (PIC). Upon addition of the 50S ribosomal subunit IF-1, IF-2 and IF-3 are released leaving the mature 70S translation initiation complex. In Sodalis glossinidius (strain morsitans), this protein is Translation initiation factor IF-1.